The chain runs to 310 residues: Syntaxin-related protein KNOLLE (310 aa).

Methionine 1 carries the N-acetylmethionine modification. The Cytoplasmic portion of the chain corresponds to 1-283 (MNDLMTKSFM…AKSHQRNSRK (283 aa)). Positions 94–159 (NEIVSGLRKA…FQGLRQKMMS (66 aa)) form a coiled coil. The 63-residue stretch at 212–274 (VVEIQDRYDA…ADGANELKTA (63 aa)) folds into the t-SNARE coiled-coil homology domain. A helical; Anchor for type IV membrane protein membrane pass occupies residues 284 to 304 (WMCIGIIVLLLIILIVVIPII). Residues 305–310 (TSFSSS) are Vesicular-facing.

It belongs to the syntaxin family. As to quaternary structure, interacts with SNAP33 and/or NPSN11 to form a t-SNARE complex and with KEULE. As to expression, abundant in flowers and developing siliques. A low level expression is seen in the seedlings, roots, and leaves.

It localises to the membrane. Its function is as follows. Involved in cytokinesis. Acts as a cell plate-specific syntaxin, required for the fusion of vesicles at the plane of cell division. In Arabidopsis thaliana (Mouse-ear cress), this protein is Syntaxin-related protein KNOLLE (KN).